A 1070-amino-acid chain; its full sequence is DNA-directed RNA polymerase subunit beta (1070 aa).

This sequence belongs to the RNA polymerase beta chain family. In terms of assembly, in plastids the minimal PEP RNA polymerase catalytic core is composed of four subunits: alpha, beta, beta', and beta''. When a (nuclear-encoded) sigma factor is associated with the core the holoenzyme is formed, which can initiate transcription.

It is found in the plastid. The protein resides in the chloroplast. It catalyses the reaction RNA(n) + a ribonucleoside 5'-triphosphate = RNA(n+1) + diphosphate. Functionally, DNA-dependent RNA polymerase catalyzes the transcription of DNA into RNA using the four ribonucleoside triphosphates as substrates. The protein is DNA-directed RNA polymerase subunit beta of Gossypium hirsutum (Upland cotton).